Reading from the N-terminus, the 378-residue chain is MISQINNEERDYKLEAYDYFLDPSLIASKPSAIRHESRLMIVRNSVLEEDCLTNKFTKNLLDEFREGDLVVVNNTKVMKARLKVELENRTLVELLVLERSDECVWLCLAKPAKKLKINRKLKLKSPSEQDINLMVDGVDEETGGRFIKFPENITDLNSMNNLLDKYGEIPLPPYIKNSEEESFHENSYQTEYAINPGAVAAPTAGLHLSKSLISNLKKKGVIILPITLHVGYGTFKPIDQEDLTNLKLHKEWVSVNKEVVEEIKRIKKTDRRIIAIGTTSVRALESCYSHEINDFIPIAKYVDLVIKPGYKFRVVDGLLTNFHLPKSSLLLLVSAMIGRERLLDLYKKAIKEKFRFFSYGDAMYISPDSLLEKNRFKL.

The protein belongs to the QueA family. In terms of assembly, monomer.

It is found in the cytoplasm. It carries out the reaction 7-aminomethyl-7-carbaguanosine(34) in tRNA + S-adenosyl-L-methionine = epoxyqueuosine(34) in tRNA + adenine + L-methionine + 2 H(+). It functions in the pathway tRNA modification; tRNA-queuosine biosynthesis. Transfers and isomerizes the ribose moiety from AdoMet to the 7-aminomethyl group of 7-deazaguanine (preQ1-tRNA) to give epoxyqueuosine (oQ-tRNA). This Prochlorococcus marinus (strain MIT 9312) protein is S-adenosylmethionine:tRNA ribosyltransferase-isomerase.